Here is a 383-residue protein sequence, read N- to C-terminus: Acetylornithine deacetylase (383 aa).

His80 is a Zn(2+) binding site. Asp82 is an active-site residue. Asp112 lines the Zn(2+) pocket. Glu144 is a catalytic residue. Positions 145, 169, and 355 each coordinate Zn(2+).

It belongs to the peptidase M20A family. ArgE subfamily. In terms of assembly, homodimer. It depends on Zn(2+) as a cofactor. Co(2+) is required as a cofactor. The cofactor is glutathione.

It is found in the cytoplasm. It catalyses the reaction N(2)-acetyl-L-ornithine + H2O = L-ornithine + acetate. The protein operates within amino-acid biosynthesis; L-arginine biosynthesis; L-ornithine from N(2)-acetyl-L-ornithine (linear): step 1/1. In terms of biological role, catalyzes the hydrolysis of the amide bond of N(2)-acetylated L-amino acids. Cleaves the acetyl group from N-acetyl-L-ornithine to form L-ornithine, an intermediate in L-arginine biosynthesis pathway, and a branchpoint in the synthesis of polyamines. This is Acetylornithine deacetylase from Salmonella typhimurium (strain LT2 / SGSC1412 / ATCC 700720).